Here is an 816-residue protein sequence, read N- to C-terminus: Lon protease (816 aa).

Residues 27–221 (LPLLPIRDVV…KVNDLLAREH (195 aa)) form the Lon N-terminal domain. An ATP-binding site is contributed by 372 to 379 (GPPGVGKT). The region spanning 608 to 789 (KNEVGVVNGL…DEVLKLALEK (182 aa)) is the Lon proteolytic domain. Active-site residues include S695 and K738. The tract at residues 795-816 (PKGKAKPATPKVVVRPSKEISA) is disordered. A compositionally biased stretch (low complexity) spans 800 to 809 (KPATPKVVVR).

It belongs to the peptidase S16 family. As to quaternary structure, homohexamer. Organized in a ring with a central cavity.

The protein resides in the cytoplasm. The catalysed reaction is Hydrolysis of proteins in presence of ATP.. Functionally, ATP-dependent serine protease that mediates the selective degradation of mutant and abnormal proteins as well as certain short-lived regulatory proteins. Required for cellular homeostasis and for survival from DNA damage and developmental changes induced by stress. Degrades polypeptides processively to yield small peptide fragments that are 5 to 10 amino acids long. Binds to DNA in a double-stranded, site-specific manner. The chain is Lon protease from Trichlorobacter lovleyi (strain ATCC BAA-1151 / DSM 17278 / SZ) (Geobacter lovleyi).